Consider the following 803-residue polypeptide: Urocanate reductase (803 aa).

At S258 the chain carries FMN phosphoryl serine. Residues A311, E330, N338, T339, G343, G344, and D573 each contribute to the FAD site. R632 functions as the Proton donor in the catalytic mechanism. FAD is bound by residues H739, E768, A783, and L784.

This sequence belongs to the FAD-dependent oxidoreductase 2 family. FRD/SDH subfamily. FAD is required as a cofactor. Requires FMN as cofactor.

The catalysed reaction is dihydrourocanate + A = urocanate + AH2. Catalyzes the two-electron reduction of urocanate to dihydrourocanate (also named imidazole propionate or deamino-histidine). Dihydrourocanate is present at higher concentrations in subjects with type 2 diabetes, and directly impairs glucose tolerance and insulin signaling at the level of insulin receptor substrate (IRS) through activation of p38 gamma (MAPK12)-p62-mTORC1. Therefore, the UrdA enzyme from the gut bacteria S.mutans strain UA159 may contribute to the pathogenesis of type 2 diabetes by producing the microbial metabolite dihydrourocanate. In Streptococcus mutans serotype c (strain ATCC 700610 / UA159), this protein is Urocanate reductase.